A 379-amino-acid polypeptide reads, in one-letter code: Gonadotropin-releasing hormone II receptor (379 aa).

The Extracellular segment spans residues 1-45; that stretch reads MSGNTTLLLSNPTNVLDNSSVLNVSVSPPVLKWETPTFTTAARFR. N-linked (GlcNAc...) asparagine glycosylation is found at asparagine 4, asparagine 18, and asparagine 23. The helical transmembrane segment at 46–65 threads the bilayer; sequence VAATLVLFVFAAASNLSVLL. Residues 66–80 lie on the Cytoplasmic side of the membrane; sequence SVTRGRGRRLASHLR. The chain crosses the membrane as a helical span at residues 81–100; the sequence is PLIASLASADLVMTFVVMPL. Over 101–118 the chain is Extracellular; that stretch reads DAVWNVTVQWYAGDAMCK. Asparagine 105 carries an N-linked (GlcNAc...) asparagine glycan. A disulfide bridge connects residues cysteine 117 and cysteine 194. The chain crosses the membrane as a helical span at residues 119–140; that stretch reads LMCFLKLFAMHSAAFILVVVSL. Topologically, residues 141-167 are cytoplasmic; it reads DRHHAILHPLDTLDAGRRNRRMLLTAW. Residues 168-184 form a helical membrane-spanning segment; the sequence is ILSLLLASPQLFIFRAI. Topologically, residues 185–210 are extracellular; the sequence is KAKGVDFVQCATHGSFQQHWQETAYN. A helical transmembrane segment spans residues 211-230; that stretch reads MFHFVTLYVFPLLVMSLCYT. Over 231–283 the chain is Cytoplasmic; it reads RILVEINRQMHRSKDKAGEPCLRRSGTDMIPKARMKTLKMTIIIVASFVICWT. The helical transmembrane segment at 284–302 threads the bilayer; it reads PYYLLGIWYWFQPQMLHVI. The Extracellular segment spans residues 303–308; that stretch reads PDYVHH. The helical transmembrane segment at 309-328 threads the bilayer; sequence VFFVFGNLNTCCDPVIYGFF. At 329-379 the chain is on the cytoplasmic side; it reads TPSFRADLSRCFCWRNQNASAKSLPHFSGHRREVSGEAESDLGSGDQPSGQ. The tract at residues 355–379 is disordered; it reads FSGHRREVSGEAESDLGSGDQPSGQ.

Belongs to the G-protein coupled receptor 1 family. Phosphorylated on the C-terminal cytoplasmic tail.

It is found in the cell membrane. In terms of biological role, receptor for gonadotropin releasing hormone II (GnRH II). This receptor mediates its action by association with G proteins that activate a phosphatidylinositol-calcium second messenger system. This is Gonadotropin-releasing hormone II receptor from Clarias gariepinus (North African catfish).